A 545-amino-acid polypeptide reads, in one-letter code: Chaperonin GroEL (545 aa).

ATP contacts are provided by residues 30-33, K51, 87-91, G415, and D496; these read TLGP and DGTTT.

It belongs to the chaperonin (HSP60) family. As to quaternary structure, forms a cylinder of 14 subunits composed of two heptameric rings stacked back-to-back. Interacts with the co-chaperonin GroES.

Its subcellular location is the cytoplasm. It carries out the reaction ATP + H2O + a folded polypeptide = ADP + phosphate + an unfolded polypeptide.. In terms of biological role, together with its co-chaperonin GroES, plays an essential role in assisting protein folding. The GroEL-GroES system forms a nano-cage that allows encapsulation of the non-native substrate proteins and provides a physical environment optimized to promote and accelerate protein folding. This is Chaperonin GroEL from Rhodobacter capsulatus (Rhodopseudomonas capsulata).